We begin with the raw amino-acid sequence, 239 residues long: Exosome complex component Rrp41 (239 aa).

The disordered stretch occupies residues 1–21 (MEERPERLISEDGLRLDGRKP).

It belongs to the RNase PH family. Rrp41 subfamily. Component of the archaeal exosome complex. Forms a hexameric ring-like arrangement composed of 3 Rrp41-Rrp42 heterodimers. The hexameric ring associates with a trimer of Rrp4 and/or Csl4 subunits.

The protein localises to the cytoplasm. Functionally, catalytic component of the exosome, which is a complex involved in RNA degradation. Has 3'-&gt;5' exoribonuclease activity. Can also synthesize heteromeric RNA-tails. The chain is Exosome complex component Rrp41 from Methanopyrus kandleri (strain AV19 / DSM 6324 / JCM 9639 / NBRC 100938).